Here is a 231-residue protein sequence, read N- to C-terminus: Acyl-protein thioesterase 1 (231 aa).

Catalysis depends on charge relay system residues serine 121, aspartate 178, and histidine 211.

The protein belongs to the AB hydrolase superfamily. AB hydrolase 2 family.

Its subcellular location is the cytoplasm. The protein localises to the nucleus. The catalysed reaction is S-hexadecanoyl-L-cysteinyl-[protein] + H2O = L-cysteinyl-[protein] + hexadecanoate + H(+). Functionally, hydrolyzes fatty acids from S-acylated cysteine residues in proteins with a strong preference for palmitoylated G-alpha proteins over other acyl substrates. Mediates the deacylation of G-alpha proteins such as GPA1 in vivo, but has weak or no activity toward palmitoylated Ras proteins. Has weak lysophospholipase activity in vitro; however such activity may not exist in vivo. The chain is Acyl-protein thioesterase 1 from Candida albicans (strain SC5314 / ATCC MYA-2876) (Yeast).